The following is a 393-amino-acid chain: Phosphoglycerate kinase (393 aa).

Substrate contacts are provided by residues 22-24, arginine 37, 60-63, arginine 119, and arginine 152; these read DFN and HLGR. ATP-binding positions include lysine 202, glycine 293, glutamate 324, and 350 to 353; that span reads GGDS.

This sequence belongs to the phosphoglycerate kinase family. Monomer.

It is found in the cytoplasm. It catalyses the reaction (2R)-3-phosphoglycerate + ATP = (2R)-3-phospho-glyceroyl phosphate + ADP. It functions in the pathway carbohydrate degradation; glycolysis; pyruvate from D-glyceraldehyde 3-phosphate: step 2/5. This Borreliella burgdorferi (strain ZS7) (Borrelia burgdorferi) protein is Phosphoglycerate kinase.